Here is a 368-residue protein sequence, read N- to C-terminus: Methionine import ATP-binding protein MetN (368 aa).

The 256-residue stretch at 5-260 folds into the ABC transporter domain; the sequence is IELNNLSVQF…PKEALTKQFI (256 aa). 41–48 contributes to the ATP binding site; it reads GYSGAGKS.

It belongs to the ABC transporter superfamily. Methionine importer (TC 3.A.1.24) family. The complex is composed of two ATP-binding proteins (MetN), two transmembrane proteins (MetI) and a solute-binding protein (MetQ).

Its subcellular location is the cell membrane. The enzyme catalyses L-methionine(out) + ATP + H2O = L-methionine(in) + ADP + phosphate + H(+). It carries out the reaction D-methionine(out) + ATP + H2O = D-methionine(in) + ADP + phosphate + H(+). Functionally, part of the ABC transporter complex MetNIQ involved in methionine import. Responsible for energy coupling to the transport system. The chain is Methionine import ATP-binding protein MetN from Lactococcus lactis subsp. cremoris (strain MG1363).